The chain runs to 635 residues: MNIKSELNYSNGSNDSDIYNEYGGGSGDETYNKSDTVDFRSKVIPQQSNLPPINNKTDRSHFRESMVASKKTIGAFVISDIAIGKGAFATVFKGLNTLSGDFVAIKRFEKSKISNEQHSSVSTEFDILQRLNHENIVRILGREENENYIYIFLEYMENGSLSTILNNFGTFPESLICNYVENVLKGLVYLHQEGVIHRDIKAANILINKAGEAKLSDFGTAGEIIKESDKRYSVVGTPYWMAPEVIEISGHCQVSDIWSLGCTIIELFTSYPPYFDLNPLGAMYRICQDDRPPLPDDISSELANFLERCFCKSTEERATAKELLSHPWITKNRTNLINHQRNSSKQFTSPQIIINNHQKSLLSNSSGGDDSVTDSDLSISNQSSRSSSFLLDDGGGGGGSKNHTVILTKQQPTPDQIEFNKMQMELQLLRLRVGELETDLKKEQDLKKDSDRKYREILLSSMHYIYIIDSTMNTITNSGGQSIKPQISNDVNHLRSIMRDQIETEYFQTFPDDNMVPRFIQRRFTHVDQANMMIPKKALEAQKRREKEQEKLKEQEKLKEKKKEKDIKKEKDKKDKKDKQLKDSSSSTTTTNSTPSTPDHSAFHSSPITPLSPVRENSKPFLSLKGRSSSKIFNE.

The 253-residue stretch at 77 to 329 (VISDIAIGKG…AKELLSHPWI (253 aa)) folds into the Protein kinase domain. ATP is bound by residues 83–91 (IGKGAFATV) and Lys-106. The active-site Proton acceptor is Asp-199. Over residues 360 to 392 (SLLSNSSGGDDSVTDSDLSISNQSSRSSSFLLD) the composition is skewed to low complexity. The tract at residues 360–405 (SLLSNSSGGDDSVTDSDLSISNQSSRSSSFLLDDGGGGGGSKNHTV) is disordered. 2 coiled-coil regions span residues 417-456 (IEFNKMQMELQLLRLRVGELETDLKKEQDLKKDSDRKYRE) and 536-585 (KKAL…KDSS). Residues 540 to 582 (EAQKRREKEQEKLKEQEKLKEKKKEKDIKKEKDKKDKKDKQLK) show a composition bias toward basic and acidic residues. Residues 540–635 (EAQKRREKEQ…GRSSSKIFNE (96 aa)) form a disordered region. The segment covering 583-598 (DSSSSTTTTNSTPSTP) has biased composition (low complexity). Residues 626 to 635 (GRSSSKIFNE) are compositionally biased toward polar residues.

Belongs to the protein kinase superfamily. STE Ser/Thr protein kinase family. It depends on Mg(2+) as a cofactor.

It carries out the reaction L-seryl-[protein] + ATP = O-phospho-L-seryl-[protein] + ADP + H(+). The catalysed reaction is L-threonyl-[protein] + ATP = O-phospho-L-threonyl-[protein] + ADP + H(+). The chain is Probable serine/threonine-protein kinase DDB_G0270146 from Dictyostelium discoideum (Social amoeba).